We begin with the raw amino-acid sequence, 304 residues long: Lipoyl synthase (304 aa).

Residues 1–21 (MAPELIQIDLEPRKPAPKPSW) form a disordered region. [4Fe-4S] cluster contacts are provided by C48, C53, C59, C74, C78, C81, and S287. One can recognise a Radical SAM core domain in the interval 60 to 276 (WNHKTATFML…KEEAMKMGFR (217 aa)).

The protein belongs to the radical SAM superfamily. Lipoyl synthase family. [4Fe-4S] cluster serves as cofactor.

It is found in the cytoplasm. It carries out the reaction [[Fe-S] cluster scaffold protein carrying a second [4Fe-4S](2+) cluster] + N(6)-octanoyl-L-lysyl-[protein] + 2 oxidized [2Fe-2S]-[ferredoxin] + 2 S-adenosyl-L-methionine + 4 H(+) = [[Fe-S] cluster scaffold protein] + N(6)-[(R)-dihydrolipoyl]-L-lysyl-[protein] + 4 Fe(3+) + 2 hydrogen sulfide + 2 5'-deoxyadenosine + 2 L-methionine + 2 reduced [2Fe-2S]-[ferredoxin]. Its pathway is protein modification; protein lipoylation via endogenous pathway; protein N(6)-(lipoyl)lysine from octanoyl-[acyl-carrier-protein]: step 2/2. Functionally, catalyzes the radical-mediated insertion of two sulfur atoms into the C-6 and C-8 positions of the octanoyl moiety bound to the lipoyl domains of lipoate-dependent enzymes, thereby converting the octanoylated domains into lipoylated derivatives. The chain is Lipoyl synthase from Koribacter versatilis (strain Ellin345).